Consider the following 81-residue polypeptide: Sec-independent protein translocase protein TatA (81 aa).

A helical transmembrane segment spans residues 1–21; it reads MGGLQPWHWVIVIAVFVLLFG. The segment covering 46–56 has biased composition (basic and acidic residues); it reads MQAESKGDEPK. A disordered region spans residues 46–81; the sequence is MQAESKGDEPKPATPIASERVDTTAPEQQSTDRHTA.

It belongs to the TatA/E family. In terms of assembly, the Tat system comprises two distinct complexes: a TatABC complex, containing multiple copies of TatA, TatB and TatC subunits, and a separate TatA complex, containing only TatA subunits. Substrates initially bind to the TatABC complex, which probably triggers association of the separate TatA complex to form the active translocon.

The protein localises to the cell membrane. In terms of biological role, part of the twin-arginine translocation (Tat) system that transports large folded proteins containing a characteristic twin-arginine motif in their signal peptide across membranes. TatA could form the protein-conducting channel of the Tat system. The polypeptide is Sec-independent protein translocase protein TatA (Mycolicibacterium smegmatis (strain ATCC 700084 / mc(2)155) (Mycobacterium smegmatis)).